The following is a 208-amino-acid chain: Uracil phosphoribosyltransferase (208 aa).

Residues arginine 78, arginine 103, and 130–138 (DPMLATGGS) each bind 5-phospho-alpha-D-ribose 1-diphosphate. Residues isoleucine 193 and 198–200 (GDA) contribute to the uracil site. 5-phospho-alpha-D-ribose 1-diphosphate is bound at residue aspartate 199.

This sequence belongs to the UPRTase family. Mg(2+) is required as a cofactor.

It carries out the reaction UMP + diphosphate = 5-phospho-alpha-D-ribose 1-diphosphate + uracil. The protein operates within pyrimidine metabolism; UMP biosynthesis via salvage pathway; UMP from uracil: step 1/1. Its activity is regulated as follows. Allosterically activated by GTP. Functionally, catalyzes the conversion of uracil and 5-phospho-alpha-D-ribose 1-diphosphate (PRPP) to UMP and diphosphate. The chain is Uracil phosphoribosyltransferase from Actinobacillus pleuropneumoniae serotype 5b (strain L20).